Consider the following 337-residue polypeptide: Interferon gamma receptor 2 (337 aa).

Residues 1 to 21 form the signal peptide; the sequence is MRPTLLWSLLLLLGVFAAAAA. Topologically, residues 28–247 are extracellular; sequence SQLPAPQHPK…MADASTELQQ (220 aa). Residues 31 to 129 form the Fibronectin type-III 1 domain; that stretch reads PAPQHPKIRL…GALHSAWVTM (99 aa). N56 and N85 each carry an N-linked (GlcNAc...) asparagine glycan. C86 and C94 are joined by a disulfide. N-linked (GlcNAc...) asparagine glycosylation is found at N110, N137, N219, and N231. The Fibronectin type-III 2 domain occupies 142–240; the sequence is PPENIEVTPG…NISCYETMAD (99 aa). C209 and C234 are joined by a disulfide. Residues 248 to 268 traverse the membrane as a helical segment; the sequence is VILISVGTFSLLSVLAGACFF. The Cytoplasmic portion of the chain corresponds to 269–337; the sequence is LVLKYRGLIK…KEQEDVLQTL (69 aa). The Dileucine internalization motif signature appears at 276–277; sequence LI.

The protein belongs to the type II cytokine receptor family. In terms of assembly, heterodimer with IFNGR1, to form the IFNG receptor complex. Interacts (via intracellular domain) with JAK2. In terms of tissue distribution, expressed in T-cells (at protein level).

It localises to the cell membrane. Its subcellular location is the cytoplasmic vesicle membrane. The protein resides in the golgi apparatus membrane. It is found in the endoplasmic reticulum membrane. The protein localises to the cytoplasm. Functionally, associates with IFNGR1 to form a receptor for the cytokine interferon gamma (IFNG). Ligand binding stimulates activation of the JAK/STAT signaling pathway. Required for signal transduction in contrast to other receptor subunit responsible for ligand binding. This Homo sapiens (Human) protein is Interferon gamma receptor 2.